A 431-amino-acid polypeptide reads, in one-letter code: Histidine--tRNA ligase (431 aa).

This sequence belongs to the class-II aminoacyl-tRNA synthetase family. As to quaternary structure, homodimer.

It localises to the cytoplasm. It catalyses the reaction tRNA(His) + L-histidine + ATP = L-histidyl-tRNA(His) + AMP + diphosphate + H(+). The sequence is that of Histidine--tRNA ligase from Finegoldia magna (strain ATCC 29328 / DSM 20472 / WAL 2508) (Peptostreptococcus magnus).